A 635-amino-acid chain; its full sequence is Threonine--tRNA ligase (635 aa).

Positions 1–61 constitute a TGS domain; sequence MPVIRLPDGS…TDDADLSIIT (61 aa). Positions 242-533 are catalytic; it reads DHRKLGRQLD…LIENYAGAMP (292 aa). 3 residues coordinate Zn(2+): cysteine 333, histidine 384, and histidine 510.

Belongs to the class-II aminoacyl-tRNA synthetase family. As to quaternary structure, homodimer. It depends on Zn(2+) as a cofactor.

Its subcellular location is the cytoplasm. The catalysed reaction is tRNA(Thr) + L-threonine + ATP = L-threonyl-tRNA(Thr) + AMP + diphosphate + H(+). Its function is as follows. Catalyzes the attachment of threonine to tRNA(Thr) in a two-step reaction: L-threonine is first activated by ATP to form Thr-AMP and then transferred to the acceptor end of tRNA(Thr). Also edits incorrectly charged L-seryl-tRNA(Thr). This Methylobacillus flagellatus (strain ATCC 51484 / DSM 6875 / VKM B-1610 / KT) protein is Threonine--tRNA ligase.